Consider the following 238-residue polypeptide: MTPHINAPAGAFADVVLMPGDPLRAKYIAETFLENAEQVTNVRNMFGYTGTYKGRRISIMGHGMGIPSCSIYAKELITEYGVKKIIRVGSCGAVRADVKLRDIVIGSGACTDSKVNRIRFRDNDFAAIADFEMTLAAYQVAKQKNISVQVGNLFSADLFYTPDVAMFDVMEKYGILGVEMEAAGIYVVAAEYGVKSLAICTVSDHIRSGEKLSAEDRQLTFNEMIEIALESVLIGDQT.

An a purine D-ribonucleoside-binding site is contributed by His4. Phosphate-binding positions include Gly20, Arg24, Arg43, and 87 to 90; that span reads RVGS. A purine D-ribonucleoside contacts are provided by residues 179–181 and 203–204; these read EME and SD. Asp204 acts as the Proton donor in catalysis.

This sequence belongs to the PNP/UDP phosphorylase family. In terms of assembly, homohexamer; trimer of homodimers.

It carries out the reaction a purine D-ribonucleoside + phosphate = a purine nucleobase + alpha-D-ribose 1-phosphate. The enzyme catalyses a purine 2'-deoxy-D-ribonucleoside + phosphate = a purine nucleobase + 2-deoxy-alpha-D-ribose 1-phosphate. Its function is as follows. Catalyzes the reversible phosphorolytic breakdown of the N-glycosidic bond in the beta-(deoxy)ribonucleoside molecules, with the formation of the corresponding free purine bases and pentose-1-phosphate. The sequence is that of Purine nucleoside phosphorylase DeoD-type from Haemophilus ducreyi (strain 35000HP / ATCC 700724).